A 410-amino-acid chain; its full sequence is Peptidase T (410 aa).

His78 is a binding site for Zn(2+). The active site involves Asp80. Asp140 lines the Zn(2+) pocket. The active-site Proton acceptor is the Glu173. The Zn(2+) site is built by Glu174, Asp196, and His379.

This sequence belongs to the peptidase M20B family. Requires Zn(2+) as cofactor.

The protein localises to the cytoplasm. It carries out the reaction Release of the N-terminal residue from a tripeptide.. Functionally, cleaves the N-terminal amino acid of tripeptides. In Pectobacterium carotovorum subsp. carotovorum (strain PC1), this protein is Peptidase T.